We begin with the raw amino-acid sequence, 332 residues long: L-lactate dehydrogenase A chain (332 aa).

Ala-2 is subject to N-acetylalanine. Lys-5 carries the post-translational modification N6-acetyllysine; alternate. At Lys-5 the chain carries N6-succinyllysine; alternate. Residue Lys-14 is modified to N6-acetyllysine. NAD(+) is bound at residue Gly-29–Lys-57. Lys-57 carries the N6-acetyllysine; alternate modification. Residue Lys-57 forms a Glycyl lysine isopeptide (Lys-Gly) (interchain with G-Cter in SUMO2); alternate linkage. At Lys-81 the chain carries N6-acetyllysine. Residue Arg-99 coordinates NAD(+). Arg-106 serves as a coordination point for substrate. Position 118 is an N6-acetyllysine; alternate (Lys-118). Lys-118 carries the post-translational modification N6-succinyllysine; alternate. An N6-acetyllysine modification is found at Lys-126. Residue Asn-138 coordinates NAD(+). Substrate contacts are provided by Asn-138 and Arg-169. The active-site Proton acceptor is the His-193. Lys-224 and Lys-232 each carry N6-acetyllysine. At Tyr-239 the chain carries Phosphotyrosine. Lys-243 bears the N6-acetyllysine mark. Residue Thr-248 participates in substrate binding. Residue Thr-309 is modified to Phosphothreonine. Lys-318 is modified (N6-acetyllysine; alternate). Lys-318 carries the post-translational modification N6-succinyllysine; alternate. Thr-322 carries the post-translational modification Phosphothreonine.

It belongs to the LDH/MDH superfamily. LDH family. In terms of assembly, homotetramer. Interacts with PTEN upstream reading frame protein MP31. Post-translationally, ISGylated.

It localises to the cytoplasm. It catalyses the reaction (S)-lactate + NAD(+) = pyruvate + NADH + H(+). It participates in fermentation; pyruvate fermentation to lactate; (S)-lactate from pyruvate: step 1/1. Interconverts simultaneously and stereospecifically pyruvate and lactate with concomitant interconversion of NADH and NAD(+). The chain is L-lactate dehydrogenase A chain (LDHA) from Sus scrofa (Pig).